Consider the following 238-residue polypeptide: NADH-quinone oxidoreductase subunit C (238 aa).

Residues methionine 1–glutamate 20 form a disordered region.

Belongs to the complex I 30 kDa subunit family. In terms of assembly, NDH-1 is composed of 14 different subunits. Subunits NuoB, C, D, E, F, and G constitute the peripheral sector of the complex.

Its subcellular location is the cell membrane. The enzyme catalyses a quinone + NADH + 5 H(+)(in) = a quinol + NAD(+) + 4 H(+)(out). Functionally, NDH-1 shuttles electrons from NADH, via FMN and iron-sulfur (Fe-S) centers, to quinones in the respiratory chain. The immediate electron acceptor for the enzyme in this species is believed to be a menaquinone. Couples the redox reaction to proton translocation (for every two electrons transferred, four hydrogen ions are translocated across the cytoplasmic membrane), and thus conserves the redox energy in a proton gradient. This chain is NADH-quinone oxidoreductase subunit C, found in Mycobacterium ulcerans (strain Agy99).